The sequence spans 169 residues: Cyclic pyranopterin monophosphate synthase (169 aa).

Substrate-binding positions include 83-85 (LCH) and 121-122 (ME). The active site involves Asp136.

It belongs to the MoaC family. As to quaternary structure, homohexamer; trimer of dimers.

The enzyme catalyses (8S)-3',8-cyclo-7,8-dihydroguanosine 5'-triphosphate = cyclic pyranopterin phosphate + diphosphate. It participates in cofactor biosynthesis; molybdopterin biosynthesis. Its function is as follows. Catalyzes the conversion of (8S)-3',8-cyclo-7,8-dihydroguanosine 5'-triphosphate to cyclic pyranopterin monophosphate (cPMP). This Rhodospirillum centenum (strain ATCC 51521 / SW) protein is Cyclic pyranopterin monophosphate synthase.